We begin with the raw amino-acid sequence, 1056 residues long: 120.7 kDa protein in NOF-FB transposable element (1056 aa).

The disordered stretch occupies residues 716-749 (KTIKPTEGNDAEDNDTDDENKEMDLSEQPKEKPR). Residues 724–736 (NDAEDNDTDDENK) are compositionally biased toward acidic residues. Positions 737 to 749 (EMDLSEQPKEKPR) are enriched in basic and acidic residues.

The protein localises to the nucleus. May be involved in the transposition of NOF-FB and other FB elements. In Drosophila melanogaster (Fruit fly), this protein is 120.7 kDa protein in NOF-FB transposable element (NOF).